The primary structure comprises 686 residues: Translation initiation factor IF-2 (686 aa).

Positions 35–99 are disordered; sequence MSTVEDETAE…EHGQKDTDRR (65 aa). Residues 50 to 68 show a composition bias toward basic and acidic residues; it reads LQEEDKPEEKISKKEPDKK. Basic residues predominate over residues 69–79; that stretch reads DRKKTKGKKQM. Residues 87 to 99 show a composition bias toward basic and acidic residues; it reads EGTEHGQKDTDRR. Residues 186–355 form the tr-type G domain; sequence LRPPIVTVMG…LLVAEMEELK (170 aa). The G1 stretch occupies residues 195 to 202; it reads GHVDHGKT. 195–202 contacts GTP; the sequence is GHVDHGKT. The G2 stretch occupies residues 220 to 224; sequence GITQH. Residues 241–244 form a G3 region; the sequence is DTPG. GTP is bound by residues 241–245 and 295–298; these read DTPGH and NKVD. The interval 295–298 is G4; that stretch reads NKVD. Positions 331-333 are G5; the sequence is SAL.

This sequence belongs to the TRAFAC class translation factor GTPase superfamily. Classic translation factor GTPase family. IF-2 subfamily.

It localises to the cytoplasm. In terms of biological role, one of the essential components for the initiation of protein synthesis. Protects formylmethionyl-tRNA from spontaneous hydrolysis and promotes its binding to the 30S ribosomal subunits. Also involved in the hydrolysis of GTP during the formation of the 70S ribosomal complex. The sequence is that of Translation initiation factor IF-2 from Halothermothrix orenii (strain H 168 / OCM 544 / DSM 9562).